A 540-amino-acid polypeptide reads, in one-letter code: Probable tubulin polyglutamylase TTLL2 (540 aa).

The region spanning 41–384 is the TTL domain; sequence LKPLVFRVDE…NGLRSEEKKC (344 aa). ATP-binding positions include lysine 169, 175–176, 197–200, and 210–212; these read RG, QKYI, and KCD. A protein is bound at residue arginine 175. Residue arginine 236 participates in L-glutamate binding. Residue 255 to 256 coordinates ATP; sequence TN. 2 residues coordinate L-glutamate: serine 258 and lysine 278. Mg(2+) contacts are provided by aspartate 330, glutamate 343, and asparagine 345. L-glutamate is bound at residue lysine 361. The segment at 479-499 is disordered; sequence SQSQPHKMKGPAGDLPEAGST.

This sequence belongs to the tubulin--tyrosine ligase family. Requires Mg(2+) as cofactor. In terms of tissue distribution, highly expressed in brain, kidney, liver and testis. Expressed in heart, lung, muscle and spleen.

In terms of biological role, probable tubulin polyglutamylase that generates side chains of glutamate on the gamma-carboxyl group of specific glutamate residues within the C-terminal tail of target proteins. Similar to TTLL1, may acquire enzymatic activity only in complex with other proteins as it is most likely lacking domains important for autonomous activity. Probably involved in the side-chain initiation step of the polyglutamylation reaction rather than the elongation step. This Mus musculus (Mouse) protein is Probable tubulin polyglutamylase TTLL2.